A 234-amino-acid chain; its full sequence is Small ribosomal subunit protein uS3 (234 aa).

One can recognise a KH type-2 domain in the interval Val-39–Lys-107.

The protein belongs to the universal ribosomal protein uS3 family. In terms of assembly, part of the 30S ribosomal subunit. Forms a tight complex with proteins S10 and S14.

Binds the lower part of the 30S subunit head. Binds mRNA in the 70S ribosome, positioning it for translation. The polypeptide is Small ribosomal subunit protein uS3 (Haemophilus ducreyi (strain 35000HP / ATCC 700724)).